The chain runs to 334 residues: Heat-inducible transcription repressor HrcA (334 aa).

This sequence belongs to the HrcA family.

Its function is as follows. Negative regulator of class I heat shock genes (grpE-dnaK-dnaJ and groELS operons). Prevents heat-shock induction of these operons. This is Heat-inducible transcription repressor HrcA from Bordetella bronchiseptica (strain ATCC BAA-588 / NCTC 13252 / RB50) (Alcaligenes bronchisepticus).